Consider the following 336-residue polypeptide: Dihydroorotate dehydrogenase (quinone) (336 aa).

FMN is bound by residues 62 to 66 (AGLDK) and Thr86. Lys66 lines the substrate pocket. 111 to 115 (NRMGF) provides a ligand contact to substrate. FMN contacts are provided by Asn139 and Asn172. Asn172 lines the substrate pocket. The active-site Nucleophile is the Ser175. Residue Asn177 coordinates substrate. Residues Lys217 and Thr245 each contribute to the FMN site. 246 to 247 (NT) contacts substrate. FMN-binding positions include Gly268, Gly297, and 318–319 (YS).

It belongs to the dihydroorotate dehydrogenase family. Type 2 subfamily. Monomer. Requires FMN as cofactor.

It is found in the cell membrane. The enzyme catalyses (S)-dihydroorotate + a quinone = orotate + a quinol. The protein operates within pyrimidine metabolism; UMP biosynthesis via de novo pathway; orotate from (S)-dihydroorotate (quinone route): step 1/1. Its function is as follows. Catalyzes the conversion of dihydroorotate to orotate with quinone as electron acceptor. The sequence is that of Dihydroorotate dehydrogenase (quinone) from Escherichia coli (strain SE11).